The chain runs to 320 residues: GPI-specific phospholipase A2-like PGAP3 (320 aa).

A signal peptide spans Met1 to Gly23. The Lumenal portion of the chain corresponds to Asp24–Arg98. N-linked (GlcNAc...) asparagine glycosylation is present at Asn40. The helical transmembrane segment at Phe99–Leu119 threads the bilayer. At Val120 to Met135 the chain is on the cytoplasmic side. A helical membrane pass occupies residues Tyr136–Phe156. Residues His157–Tyr169 lie on the Lumenal side of the membrane. The helical transmembrane segment at Phe170–Leu190 threads the bilayer. The Cytoplasmic portion of the chain corresponds to Gln191–Ala198. The chain crosses the membrane as a helical span at residues Phe199–Phe219. The Lumenal segment spans residues Asp220–Tyr223. A helical membrane pass occupies residues Asn224–Leu244. Residues Arg245 to Met257 are Cytoplasmic-facing. Residues Val258 to Phe278 traverse the membrane as a helical segment. Residue Trp279 is a topological domain, lumenal. A helical transmembrane segment spans residues Val280 to Phe299. Residues Arg300–Asp320 are Cytoplasmic-facing.

It belongs to the PGAP3 family.

Its subcellular location is the golgi apparatus membrane. In terms of biological role, involved in the fatty acid remodeling steps of GPI-anchor maturation where the unsaturated acyl chain at sn-2 of inositol phosphate is replaced by a saturated stearoyl chain. May catalyze the first step of the fatty acid remodeling, by removing the unsaturated acyl chain at sn-2 of inositol phosphate, generating a lyso-GPI intermediate. The fatty acid remodeling steps is critical for the integration of GPI-APs into lipid rafts. The chain is GPI-specific phospholipase A2-like PGAP3 from Mus musculus (Mouse).